The following is a 324-amino-acid chain: mRNA decay activator protein ZFP36 (324 aa).

A necessary for nuclear export region spans residues 1 to 15 (MDLAAIYKSLLSLSP). The interval 1–98 (MDLAAIYKSL…PTSPTATPTT (98 aa)) is necessary and sufficient for the association with mRNA decay enzymes and mRNA decay activation. Necessary for localization of ARE-containing mRNAs to processing bodies (PBs) stretches follow at residues 1–172 (MDLA…DLAA) and 98–324 (TSSR…SVSE). Over residues 15 to 46 (PELPSDLGETESSTSWASSGPWSLSSSDSSLP) the composition is skewed to low complexity. The tract at residues 15–50 (PELPSDLGETESSTSWASSGPWSLSSSDSSLPEVAA) is disordered. S58 is subject to Phosphoserine; by MAPKAPK2. At S64 the chain carries Phosphoserine. One copy of the P-P-P-P-G repeat lies at 69-73 (PPPPG). Residues 76–100 (PLAPRPSSDWSPSPTSPTATPTTSS) are disordered. Phosphoserine occurs at positions 86 and 88. T90 bears the Phosphothreonine mark. S91 is modified (phosphoserine). Residues 93–166 (TATPTTSSRY…GSRCHFIHNP (74 aa)) form a necessary for nuclear localization region. A necessary for RNA-binding region spans residues 95 to 171 (TPTTSSRYKT…FIHNPSEDLA (77 aa)). 2 consecutive C3H1-type zinc fingers follow at residues 101 to 129 (RYKT…HGLG) and 139 to 167 (KYKT…HNPS). Positions 101 to 192 (RYKTELCRTF…ISFSGLPSGR (92 aa)) are necessary for interaction with PABPN1. Position 167 is a phosphoserine (S167). The necessary for mRNA decay activation stretch occupies residues 172–324 (APGHPHVLRQ…PIFNRISVSE (153 aa)). S184 carries the post-translational modification Phosphoserine; by MAPKAPK2. Disordered stretches follow at residues 185–227 (FSGL…LLLS) and 270–324 (PSAH…SVSE). Residue S195 is modified to Phosphoserine. The stretch at 196-200 (PPPAS) is one P-P-P-P-G repeat. Low complexity predominate over residues 204–214 (PSVSSWSFSPS). S216 is subject to Phosphoserine. The P-P-P-P-G repeat unit spans residues 218–222 (PPPPG). S227 carries the phosphoserine; by MAPK1; in vitro modification. 3 positions are modified to phosphoserine: S274, S294, and S321. The interaction with CNOT1 stretch occupies residues 310 to 324 (APRRLPIFNRISVSE).

As to quaternary structure, associates with cytoplasmic CCR4-NOT and PAN2-PAN3 deadenylase complexes to trigger ARE-containing mRNA deadenylation and decay processes. Part of a mRNA decay activation complex at least composed of poly(A)-specific exoribonucleases CNOT6, EXOSC2 and XRN1 and mRNA-decapping enzymes DCP1A and DCP2. Associates with the RNA exosome complex. Interacts (via phosphorylated form) with 14-3-3 proteins; these interactions promote exclusion of ZFP36 from cytoplasmic stress granules in response to arsenite treatment in a MAPKAPK2-dependent manner and does not prevent CCR4-NOT deadenylase complex recruitment or ZFP36-induced ARE-containing mRNA deadenylation and decay processes. Interacts with 14-3-3 proteins; these interactions occur in response to rapamycin in an Akt-dependent manner. Interacts with AGO2 and AGO4. Interacts (via C-terminus) with CNOT1; this interaction occurs in a RNA-independent manner and induces mRNA deadenylation. Interacts (via N-terminus) with CNOT6. Interacts with CNOT6L. Interacts (via C-terminus) with CNOT7; this interaction occurs in a RNA-independent manner, induces mRNA deadenylation and is inhibited in a phosphorylation MAPKAPK2-dependent manner. Interacts (via unphosphorylated form) with CNOT8; this interaction occurs in a RNA-independent manner and is inhibited in a phosphorylation MAPKAPK2-dependent manner. Interacts with DCP1A. Interacts (via N-terminus) with DCP2. Interacts with EDC3. Interacts (via N-terminus) with EXOSC2. Interacts with heat shock 70 kDa proteins. Interacts with KHSRP; this interaction increases upon cytokine-induced treatment. Interacts with MAP3K4; this interaction enhances the association with SH3KBP1/CIN85. Interacts with MAPKAPK2; this interaction occurs upon skeletal muscle satellite cell activation. Interacts with NCL. Interacts with NUP214; this interaction increases upon lipopolysaccharide (LPS) stimulation. Interacts with PABPC1; this interaction occurs in a RNA-dependent manner. Interacts (via hypophosphorylated form) with PABPN1 (via RRM domain and C-terminal arginine-rich region); this interaction occurs in the nucleus in a RNA-independent manner, decreases in presence of single-stranded poly(A) RNA-oligomer and in a p38 MAPK-dependent-manner and inhibits nuclear poly(A) tail synthesis. Interacts with PAN2. Interacts (via C3H1-type zinc finger domains) with PKM. Interacts (via C3H1-type zinc finger domains) with nuclear RNA poly(A) polymerase. Interacts with PPP2CA; this interaction occurs in LPS-stimulated cells and induces ZFP36 dephosphorylation, and hence may promote ARE-containing mRNAs decay. Interacts (via C-terminus) with PRR5L (via C-terminus); this interaction may accelerate ZFP36-mediated mRNA decay during stress. Interacts (via C-terminus) with SFN; this interaction occurs in a phosphorylation-dependent manner. Interacts (via extreme C-terminal region) with SH3KBP1/CIN85 (via SH3 domains); this interaction enhances MAP3K4-induced phosphorylation of ZFP36 at Ser-64 and Ser-91 and does not alter neither ZFP36 binding to ARE-containing transcripts nor TNF-alpha mRNA decay. Interacts with XRN1. Interacts (via C-terminus and Ser-184 phosphorylated form) with YWHAB; this interaction occurs in a p38/MAPKAPK2-dependent manner, increases cytoplasmic localization of ZFP36 and protects ZFP36 from Ser-184 dephosphorylation by serine/threonine phosphatase 2A, and hence may be crucial for stabilizing ARE-containing mRNAs. Interacts (via phosphorylated form) with YWHAE. Interacts (via C-terminus) with YWHAG; this interaction occurs in a phosphorylation-dependent manner. Interacts with YWHAH; this interaction occurs in a phosphorylation-dependent manner. Interacts with YWHAQ; this interaction occurs in a phosphorylation-dependent manner. Interacts with (via C-terminus) YWHAZ; this interaction occurs in a phosphorylation-dependent manner. Does not interact with SH3KBP1. Interacts (via P-P-P-P-G repeats) with GIGYF2; the interaction is direct. In terms of processing, phosphorylated. Phosphorylation at serine and/or threonine residues occurs in a p38 MAPK- and MAPKAPK2-dependent manner. Phosphorylated by MAPKAPK2 at Ser-58 and Ser-184; phosphorylation increases its stability and cytoplasmic localization, promotes binding to 14-3-3 adapter proteins and inhibits the recruitment of cytoplasmic CCR4-NOT and PAN2-PAN3 deadenylase complexes to the mRNA decay machinery, thereby inhibiting ZFP36-induced ARE-containing mRNA deadenylation and decay processes. Phosphorylation by MAPKAPK2 does not impair ARE-containing RNA-binding. Phosphorylated in a MAPKAPK2- and p38 MAPK-dependent manner upon skeletal muscle satellite cell activation; this phosphorylation inhibits ZFP36-mediated mRNA decay activity, and hence stabilizes MYOD1 mRNA. Phosphorylated by MAPK1 upon mitogen stimulation. Phosphorylated at Ser-64 and Ser-91; these phosphorylations increase in a SH3KBP1-dependent manner. Phosphorylated at serine and threonine residues in a pyruvate kinase PKM- and p38 MAPK-dependent manner. Phosphorylation at Ser-58 may participate in the PKM-mediated degradation of ZFP36 in a p38 MAPK-dependent manner. Dephosphorylated by serine/threonine phosphatase 2A at Ser-184. Post-translationally, ubiquitinated; pyruvate kinase (PKM)-dependent ubiquitination leads to proteasomal degradation through a p38 MAPK signaling pathway.

Its subcellular location is the nucleus. The protein resides in the cytoplasm. It localises to the cytoplasmic granule. The protein localises to the P-body. Its function is as follows. Zinc-finger RNA-binding protein that destabilizes numerous cytoplasmic AU-rich element (ARE)-containing mRNA transcripts by promoting their poly(A) tail removal or deadenylation, and hence provide a mechanism for attenuating protein synthesis. Acts as an 3'-untranslated region (UTR) ARE mRNA-binding adapter protein to communicate signaling events to the mRNA decay machinery. Recruits deadenylase CNOT7 (and probably the CCR4-NOT complex) via association with CNOT1, and hence promotes ARE-mediated mRNA deadenylation. Also functions by recruiting components of the cytoplasmic RNA decay machinery to the bound ARE-containing mRNAs. Self regulates by destabilizing its own mRNA. Binds to 3'-UTR ARE of numerous mRNAs. Also binds to ARE of its own mRNA. Plays a role in anti-inflammatory responses; suppresses tumor necrosis factor (TNF)-alpha production by stimulating ARE-mediated TNF-alpha mRNA decay and several other inflammatory ARE-containing mRNAs in interferon (IFN)- and/or lipopolysaccharide (LPS)-induced macrophages. Also plays a role in the regulation of dendritic cell maturation at the post-transcriptional level, and hence operates as part of a negative feedback loop to limit the inflammatory response. Promotes ARE-mediated mRNA decay of hypoxia-inducible factor HIF1A mRNA during the response of endothelial cells to hypoxia. Positively regulates early adipogenesis of preadipocytes by promoting ARE-mediated mRNA decay of immediate early genes (IEGs). Negatively regulates hematopoietic/erythroid cell differentiation by promoting ARE-mediated mRNA decay of the transcription factor STAT5B mRNA. Plays a role in maintaining skeletal muscle satellite cell quiescence by promoting ARE-mediated mRNA decay of the myogenic determination factor MYOD1 mRNA. Also associates with and regulates the expression of non-ARE-containing target mRNAs at the post-transcriptional level, such as MHC class I mRNAs. Participates in association with argonaute RISC catalytic components in the ARE-mediated mRNA decay mechanism; assists microRNA (miRNA) targeting ARE-containing mRNAs. May also play a role in the regulation of cytoplasmic mRNA decapping; enhances decapping of ARE-containing RNAs, in vitro. Involved in the delivery of target ARE-mRNAs to processing bodies (PBs). In addition to its cytosolic mRNA-decay function, affects nuclear pre-mRNA processing. Negatively regulates nuclear poly(A)-binding protein PABPN1-stimulated polyadenylation activity on ARE-containing pre-mRNA during LPS-stimulated macrophages. Also involved in the regulation of stress granule (SG) and P-body (PB) formation and fusion. Plays a role in the regulation of keratinocyte proliferation, differentiation and apoptosis. Plays a role as a tumor suppressor by inhibiting cell proliferation in breast cancer cells. This Bos taurus (Bovine) protein is mRNA decay activator protein ZFP36.